The primary structure comprises 96 residues: Glutamyl-tRNA(Gln) amidotransferase subunit C (96 aa).

This sequence belongs to the GatC family. As to quaternary structure, heterotrimer of A, B and C subunits.

The enzyme catalyses L-glutamyl-tRNA(Gln) + L-glutamine + ATP + H2O = L-glutaminyl-tRNA(Gln) + L-glutamate + ADP + phosphate + H(+). It catalyses the reaction L-aspartyl-tRNA(Asn) + L-glutamine + ATP + H2O = L-asparaginyl-tRNA(Asn) + L-glutamate + ADP + phosphate + 2 H(+). Functionally, allows the formation of correctly charged Asn-tRNA(Asn) or Gln-tRNA(Gln) through the transamidation of misacylated Asp-tRNA(Asn) or Glu-tRNA(Gln) in organisms which lack either or both of asparaginyl-tRNA or glutaminyl-tRNA synthetases. The reaction takes place in the presence of glutamine and ATP through an activated phospho-Asp-tRNA(Asn) or phospho-Glu-tRNA(Gln). The chain is Glutamyl-tRNA(Gln) amidotransferase subunit C from Neisseria meningitidis serogroup B (strain ATCC BAA-335 / MC58).